The primary structure comprises 66 residues: MEGISITKLLVIAVLIVLLFGTNKLRTLGSDLGAALKGFKKAMNDETPAAKKSDGVEAAPRVENKE.

A helical membrane pass occupies residues 1 to 21 (MEGISITKLLVIAVLIVLLFG). The segment at 46 to 66 (ETPAAKKSDGVEAAPRVENKE) is disordered.

The protein belongs to the TatA/E family. TatE subfamily.

It is found in the cell inner membrane. Part of the twin-arginine translocation (Tat) system that transports large folded proteins containing a characteristic twin-arginine motif in their signal peptide across membranes. TatE shares overlapping functions with TatA. The protein is Probable Sec-independent protein translocase protein TatE of Edwardsiella ictaluri (strain 93-146).